Here is a 334-residue protein sequence, read N- to C-terminus: Beta-hexosaminidase (334 aa).

Residues aspartate 60, arginine 68, arginine 133, and 163–164 (KH) each bind substrate. Histidine 176 (proton donor/acceptor) is an active-site residue. The active-site Nucleophile is the aspartate 247.

Belongs to the glycosyl hydrolase 3 family. NagZ subfamily.

The protein localises to the cytoplasm. It catalyses the reaction Hydrolysis of terminal non-reducing N-acetyl-D-hexosamine residues in N-acetyl-beta-D-hexosaminides.. It participates in cell wall biogenesis; peptidoglycan recycling. Plays a role in peptidoglycan recycling by cleaving the terminal beta-1,4-linked N-acetylglucosamine (GlcNAc) from peptide-linked peptidoglycan fragments, giving rise to free GlcNAc, anhydro-N-acetylmuramic acid and anhydro-N-acetylmuramic acid-linked peptides. This chain is Beta-hexosaminidase, found in Xanthomonas axonopodis pv. citri (strain 306).